We begin with the raw amino-acid sequence, 345 residues long: Holliday junction branch migration complex subunit RuvB (345 aa).

The tract at residues 1–186 (MSTDPDEREV…FGFTAHMDFY (186 aa)) is large ATPase domain (RuvB-L). ATP contacts are provided by residues Leu-25, Arg-26, Gly-67, Lys-70, Thr-71, Ser-72, 133-135 (EDF), Arg-176, Tyr-186, and Arg-223. Thr-71 serves as a coordination point for Mg(2+). Residues 187–257 (EPAELERVLV…VAKAALAVYD (71 aa)) form a small ATPAse domain (RuvB-S) region. Positions 260–345 (ELGLDRLDRA…AGANQPGLFE (86 aa)) are head domain (RuvB-H). Arg-315 and Arg-320 together coordinate DNA.

Belongs to the RuvB family. In terms of assembly, homohexamer. Forms an RuvA(8)-RuvB(12)-Holliday junction (HJ) complex. HJ DNA is sandwiched between 2 RuvA tetramers; dsDNA enters through RuvA and exits via RuvB. An RuvB hexamer assembles on each DNA strand where it exits the tetramer. Each RuvB hexamer is contacted by two RuvA subunits (via domain III) on 2 adjacent RuvB subunits; this complex drives branch migration. In the full resolvosome a probable DNA-RuvA(4)-RuvB(12)-RuvC(2) complex forms which resolves the HJ.

It localises to the cytoplasm. The enzyme catalyses ATP + H2O = ADP + phosphate + H(+). The RuvA-RuvB-RuvC complex processes Holliday junction (HJ) DNA during genetic recombination and DNA repair, while the RuvA-RuvB complex plays an important role in the rescue of blocked DNA replication forks via replication fork reversal (RFR). RuvA specifically binds to HJ cruciform DNA, conferring on it an open structure. The RuvB hexamer acts as an ATP-dependent pump, pulling dsDNA into and through the RuvAB complex. RuvB forms 2 homohexamers on either side of HJ DNA bound by 1 or 2 RuvA tetramers; 4 subunits per hexamer contact DNA at a time. Coordinated motions by a converter formed by DNA-disengaged RuvB subunits stimulates ATP hydrolysis and nucleotide exchange. Immobilization of the converter enables RuvB to convert the ATP-contained energy into a lever motion, pulling 2 nucleotides of DNA out of the RuvA tetramer per ATP hydrolyzed, thus driving DNA branch migration. The RuvB motors rotate together with the DNA substrate, which together with the progressing nucleotide cycle form the mechanistic basis for DNA recombination by continuous HJ branch migration. Branch migration allows RuvC to scan DNA until it finds its consensus sequence, where it cleaves and resolves cruciform DNA. In Mycobacterium marinum (strain ATCC BAA-535 / M), this protein is Holliday junction branch migration complex subunit RuvB.